The primary structure comprises 1379 residues: MKRVCTLPLWLWLGIVSEADLVSSYSMTPPTLSITEEEHIINAKDTLTITCRGQHPLEWSWPGARWTPVEGRRRWNSQPQQRPVGAGNPEEDCEGTGTKPYCKVLVLTESQANDTGYYHCYYKYIDAKIEGTTAVSAYIFVRDFEQPFINKPETLLISKKENTWVPCLVSIPDLNVTLISQNSLIHPDRKTIFWDNKKGMQVPTQLIRDSLFVQCETVIDNKVFKSNFFIIHIAGIELYDIQLYPKKAMELLVGEKLVLNCTVWAEFNSGVRFQWTYPGKQMQRAVIESERRSLQTHTELSSILTLHNVSQQDLGRYTCTATNGAQMLEESTDVIVHEKPFINVEWRKGPVIEATAGDEAVKLPVKVVAYPQPDFQWYKAGKLIPKQSQSSMQIKDVAEHHAGTYTLVLRNRLVGLEKRISLQLIVNVPPRIHEKETSSPSIYSRRSPQALTCTVYGIPAPEVIQWQWRPWMPCRMFSRRSLNSRHRAARRHQRDRMPECKDWKDVSRQDAVNPIESIDTWVEFVEGRNKTVSKLAIQEANVSAMYKCIASNKVGRDERLIYFYVTTIPDGFEIESQPSEEPIEGQDLQLSCNADNYTYENLQWYRLNLSKLHDEEGNPLVLDCKNVHHYATKMQGELRFQPDSNDATLLLTIPNISLGEEGDYVCEVQNRKTREKHCHKKYISVQALEIPRLKQNLTDIWVNVSDSIEMRCKVDGNHVPDISWYKDEKLVEEVSGIDLADFNQRLSIQRVREEDAGLYLCSVCNAKGCVNSSASVSVEGSDDKTNVEIVILIGTGVIAVFFWILLIIIFCNIKRPAHADIKTGYLSIIMDPGEVPLEEQCAYLPYDSSKWEFPRDRLRLGKVLGHGAFGKVVEASAFGINKSNSCETVAAKMLKEGATASEQKALMSELKILIHIGNHLNVVNLLGACTKPNGPLMVIVEFCKYGNLSNYLRTKREGFSPYREKSPRLRIQVQSIVEAVRADRRSRSGTSDSAIFNRFLMHKSQTVQPIQEVDDLWQSPLTMEDLICYSFQVARGMEFLASRKCIHRDLAARNILLSENNVVKICDFGLARDIYKDPDYVRKGSARLPLKWMAPESIFDKVYTTQSDVWSFGVLLWEIFSLGASPYPGVQINEEFCQRFKDGTRMRAPEYTTAEIYRIMLSCWHGDPKERPTFSDLVEILGNLLQENVQQEGKDYIPLNDSHSSEDDGFSQVPSSAQQNSDEEDFDMRIRCHSLAARYYNCVSFPGCLTGGNQIRCSSRIKTFEEFPMTHTMYKAHPDNQTDSGMVLASEEFERIENRHRKEGGFSSKGPNRTAELSAEQSDLRGRCRPSYGSQVGGQTFYNSEYGELSEHSEDRSCTPPAEGASPPALHASFFSEQY.

Residues 1 to 19 form the signal peptide; sequence MKRVCTLPLWLWLGIVSEA. Residues 20–788 lie on the Extracellular side of the membrane; sequence DLVSSYSMTP…EGSDDKTNVE (769 aa). 7 consecutive Ig-like C2-type domains span residues 30-136, 160-222, 240-335, 340-421, 430-566, 569-684, and 691-777; these read PTLS…TAVS, KENT…IDNK, DIQL…TDVI, PFIN…KRIS, PRIH…FYVT, PDGF…KYIS, and PRLK…ASVS. Cystine bridges form between Cys51–Cys120 and Cys167–Cys215. Residues 73 to 93 are disordered; it reads RRWNSQPQQRPVGAGNPEEDC. N-linked (GlcNAc...) asparagine glycans are attached at residues Asn113, Asn175, Asn260, and Asn308. Cys261 and Cys319 are joined by a disulfide. 3 disulfide bridges follow: Cys453-Cys548, Cys474-Cys500, and Cys592-Cys666. Asn529, Asn541, Asn596, Asn608, Asn655, Asn696, and Asn703 each carry an N-linked (GlcNAc...) asparagine glycan. Cys712 and Cys761 are disulfide-bonded. N-linked (GlcNAc...) asparagine glycosylation occurs at Asn771. Residues 789-809 form a helical membrane-spanning segment; it reads IVILIGTGVIAVFFWILLIII. The Cytoplasmic segment spans residues 810-1379; the sequence is FCNIKRPAHA…LHASFFSEQY (570 aa). The Protein kinase domain maps to 858–1185; sequence LRLGKVLGHG…DLVEILGNLL (328 aa). Residues 864-872 and Lys892 each bind ATP; that span reads LGHGAFGKV. The active-site Proton acceptor is Asp1049. A phosphotyrosine; by autocatalysis mark is found at Tyr1075 and Tyr1080. The segment at 1196–1224 is disordered; it reads YIPLNDSHSSEDDGFSQVPSSAQQNSDEE. Tyr1239, Tyr1240, Tyr1274, Tyr1342, and Tyr1346 each carry phosphotyrosine; by autocatalysis. The tract at residues 1299–1379 is disordered; sequence RHRKEGGFSS…LHASFFSEQY (81 aa). The segment covering 1332–1343 has biased composition (polar residues); it reads YGSQVGGQTFYN.

The protein belongs to the protein kinase superfamily. Tyr protein kinase family. CSF-1/PDGF receptor subfamily. In terms of assembly, interacts with VEGFC and VEGFD. Monomer in the absence of bound VEGFC or VEGFD. Homodimer in the presence of bound VEGFC or VEGFD. Autophosphorylated on tyrosine residues upon ligand binding. Autophosphorylation occurs in trans, i.e. one subunit of the dimeric receptor phosphorylates tyrosine residues on the other subunit.

The protein localises to the cell membrane. The protein resides in the cytoplasm. It localises to the nucleus. The enzyme catalyses L-tyrosyl-[protein] + ATP = O-phospho-L-tyrosyl-[protein] + ADP + H(+). With respect to regulation, present in an inactive conformation in the absence of bound ligand. Binding of VEGFC or VEGFD leads to dimerization and activation by autophosphorylation on tyrosine residues. Tyrosine-protein kinase that acts as a cell-surface receptor for VEGFC and VEGFD, and plays an essential role in lymphangiogenesis and in the development of the vascular network and the cardiovascular system during embryonic development. Promotes proliferation, survival and migration of endothelial cells, and regulates angiogenic sprouting. Mediates activation of the MAPK1/ERK2, MAPK3/ERK1 signaling pathway, of MAPK8 and the JUN signaling pathway, and of the AKT1 signaling pathway. The polypeptide is Vascular endothelial growth factor receptor 3 (FLT4) (Coturnix coturnix (Common quail)).